A 386-amino-acid polypeptide reads, in one-letter code: uncharacterized protein (386 aa).

An F-box domain is found at 29–76 (KYWKFLNEDCKIEVLKYLDYCSRCQLSICSKSDHKLVSITPLYVYEIE).

This is an uncharacterized protein from Caenorhabditis elegans.